A 586-amino-acid polypeptide reads, in one-letter code: Chaperonin 60 subunit alpha 1, chloroplastic (586 aa).

Residues 1-46 (MASANALSSASVLCSSRQSKLGGGNQQQGQRVSYNKRTIRRFSVRA) constitute a chloroplast transit peptide. A Phosphoserine modification is found at Ser90.

Belongs to the chaperonin (HSP60) family. In terms of assembly, part of the Cpn60 complex composed of 7 alpha and 7 beta subunits. This complex shows ATPase activity. The Cpn60 complex interacts with the Cpn10 complex. As to expression, expressed in leaves, stems, siliques and flowers.

It localises to the plastid. It is found in the chloroplast. In terms of biological role, binds RuBisCO small and large subunits and is implicated in the assembly of the enzyme oligomer. Involved in protein assisted folding. Required for proper chloroplast development. This chain is Chaperonin 60 subunit alpha 1, chloroplastic (CPN60A1), found in Arabidopsis thaliana (Mouse-ear cress).